Reading from the N-terminus, the 360-residue chain is Catabolic L-serine/threonine dehydratase (360 aa).

An N-acetylserine modification is found at serine 2. At lysine 37 the chain carries N6-(pyridoxal phosphate)lysine.

The protein belongs to the serine/threonine dehydratase family. The cofactor is pyridoxal 5'-phosphate.

The protein resides in the mitochondrion. It carries out the reaction L-serine = pyruvate + NH4(+). It catalyses the reaction L-threonine = 2-oxobutanoate + NH4(+). This is Catabolic L-serine/threonine dehydratase (CHA1) from Saccharomyces cerevisiae (strain ATCC 204508 / S288c) (Baker's yeast).